A 265-amino-acid polypeptide reads, in one-letter code: Tryptophan synthase alpha chain (265 aa).

Catalysis depends on proton acceptor residues Glu-49 and Asp-60.

The protein belongs to the TrpA family. In terms of assembly, tetramer of two alpha and two beta chains.

It catalyses the reaction (1S,2R)-1-C-(indol-3-yl)glycerol 3-phosphate + L-serine = D-glyceraldehyde 3-phosphate + L-tryptophan + H2O. It functions in the pathway amino-acid biosynthesis; L-tryptophan biosynthesis; L-tryptophan from chorismate: step 5/5. Functionally, the alpha subunit is responsible for the aldol cleavage of indoleglycerol phosphate to indole and glyceraldehyde 3-phosphate. This chain is Tryptophan synthase alpha chain, found in Desulfosudis oleivorans (strain DSM 6200 / JCM 39069 / Hxd3) (Desulfococcus oleovorans).